The chain runs to 427 residues: GTPase Obg (427 aa).

One can recognise an Obg domain in the interval 1–158 (MFVDQVKIYV…RDVTLELKVL (158 aa)). The 171-residue stretch at 159–329 (ADVGLVGFPS…LLFEVANLLE (171 aa)) folds into the OBG-type G domain. GTP contacts are provided by residues 165 to 172 (GFPSVGKS), 190 to 194 (FTTIV), 212 to 215 (DLPG), 282 to 285 (NKMD), and 310 to 312 (SAV). S172 and T192 together coordinate Mg(2+). The 79-residue stretch at 349-427 (YKFESESNFE…ILEYQFEFID (79 aa)) folds into the OCT domain.

Belongs to the TRAFAC class OBG-HflX-like GTPase superfamily. OBG GTPase family. As to quaternary structure, monomer. Mg(2+) is required as a cofactor.

It localises to the cytoplasm. In terms of biological role, an essential GTPase which binds GTP, GDP and possibly (p)ppGpp with moderate affinity, with high nucleotide exchange rates and a fairly low GTP hydrolysis rate. Plays a role in control of the cell cycle, stress response, ribosome biogenesis and in those bacteria that undergo differentiation, in morphogenesis control. This chain is GTPase Obg, found in Bacillus mycoides (strain KBAB4) (Bacillus weihenstephanensis).